Here is a 369-residue protein sequence, read N- to C-terminus: MVVFEITILGANGGPTEYGTQCFILKPARTEDPELIAVDGGAGMYQLREMLVQGRNENEGDDELVPSFYEHDREPIEFFIDSKLNIQKGLSKSLLQSLKRQGEHFESANTMKKTYEVFQGITDYYITHPHLDHISGLVVNSPSIYEQENSKKKTIWGLPHTIDVLQKHVFNDLIWPDLTAERSRKLKLKCLNPKEVQKCTIFPWDVIPFKVHHGIGVKTGAPVYSTFYIFRDRKSKDCIIVCGDVEQDRRESEESLLEEFWSYVAENIPLVHLKGILVECSCPLSSKPEQLYGHLSPIYLINELSNLNTLYNSSKGLSGLNVIVTHVKSTPAKRDPRLTILEELRFLAEERNLGDLRISIALEGHTLFL.

Belongs to the cyclic nucleotide phosphodiesterase class-II family.

It catalyses the reaction a nucleoside 3',5'-cyclic phosphate + H2O = a nucleoside 5'-phosphate + H(+). Controls the level of cAMP in yeast cells, together with the high-affinity cAMP phosphodiesterase (PDE2). The chain is 3',5'-cyclic-nucleotide phosphodiesterase 1 (PDE1) from Saccharomyces cerevisiae (strain ATCC 204508 / S288c) (Baker's yeast).